A 218-amino-acid chain; its full sequence is Elongation factor Ts (218 aa).

The involved in Mg(2+) ion dislocation from EF-Tu stretch occupies residues 82 to 85 (TDFV).

It belongs to the EF-Ts family.

It localises to the cytoplasm. In terms of biological role, associates with the EF-Tu.GDP complex and induces the exchange of GDP to GTP. It remains bound to the aminoacyl-tRNA.EF-Tu.GTP complex up to the GTP hydrolysis stage on the ribosome. The polypeptide is Elongation factor Ts (Prochlorococcus marinus (strain AS9601)).